Reading from the N-terminus, the 61-residue chain is Temporin-MT3 (61 aa).

Residues 1 to 22 form the signal peptide; sequence MFTLKKPLLLLFFLGTINLSLC. Residues 23–44 constitute a propeptide, removed in mature form; that stretch reads EQERNAEEERRDEPDERNAEVE. Position 59 is a leucine amide (leucine 59).

It belongs to the frog skin active peptide (FSAP) family. Temporin subfamily. Expressed by the skin glands.

It is found in the secreted. Its function is as follows. Antimicrobial peptide. In Amolops mantzorum (Sichuan torrent frog), this protein is Temporin-MT3.